A 646-amino-acid polypeptide reads, in one-letter code: 1-deoxy-D-xylulose-5-phosphate synthase (646 aa).

Thiamine diphosphate is bound by residues His86 and 127 to 129 (AHS). Mg(2+) is bound at residue Asp158. Thiamine diphosphate is bound by residues 159-160 (GA), Asn188, Tyr295, and Glu377. Asn188 is a Mg(2+) binding site.

The protein belongs to the transketolase family. DXPS subfamily. In terms of assembly, homodimer. It depends on Mg(2+) as a cofactor. Thiamine diphosphate is required as a cofactor.

The enzyme catalyses D-glyceraldehyde 3-phosphate + pyruvate + H(+) = 1-deoxy-D-xylulose 5-phosphate + CO2. It participates in metabolic intermediate biosynthesis; 1-deoxy-D-xylulose 5-phosphate biosynthesis; 1-deoxy-D-xylulose 5-phosphate from D-glyceraldehyde 3-phosphate and pyruvate: step 1/1. Its function is as follows. Catalyzes the acyloin condensation reaction between C atoms 2 and 3 of pyruvate and glyceraldehyde 3-phosphate to yield 1-deoxy-D-xylulose-5-phosphate (DXP). The polypeptide is 1-deoxy-D-xylulose-5-phosphate synthase (Burkholderia ambifaria (strain ATCC BAA-244 / DSM 16087 / CCUG 44356 / LMG 19182 / AMMD) (Burkholderia cepacia (strain AMMD))).